The primary structure comprises 62 residues: MPRKAKVAKDLMYYPKWKSRKKNRCPICGRPRAFIRYFNMCRICFREHALRGDLPGVRKASW.

4 residues coordinate Zn(2+): Cys25, Cys28, Cys41, and Cys44.

This sequence belongs to the universal ribosomal protein uS14 family. Zinc-binding uS14 subfamily. In terms of assembly, part of the 30S ribosomal subunit. Contacts proteins S3 and S10. Zn(2+) serves as cofactor.

Binds 16S rRNA, required for the assembly of 30S particles and may also be responsible for determining the conformation of the 16S rRNA at the A site. The chain is Small ribosomal subunit protein uS14 from Aquifex aeolicus (strain VF5).